We begin with the raw amino-acid sequence, 1562 residues long: Phospholipid-transporting ATPase dnf1 (1562 aa).

Disordered stretches follow at residues 1-38, 55-94, 115-134, and 146-166; these read MKSS…ADDG, LPLG…SDSR, TPST…KKAH, and PLDD…NGRP. Over 1 to 275 the chain is Extracellular; the sequence is MKSSGIAGDS…IAIMQMIPGW (275 aa). Polar residues predominate over residues 12-21; that stretch reads GFETNFLNET. Acidic residues predominate over residues 60–69; that stretch reads DENELDEIDI. The span at 71 to 86 shows a compositional bias: basic and acidic residues; that stretch reads GDSKKLDSVEVDESHD. The chain crosses the membrane as a helical span at residues 276 to 296; that stretch reads STTGTYTTIIPLLIFISIAIL. The Cytoplasmic segment spans residues 297-574; that stretch reads REGFDNYRRY…APSMQKVTNR (278 aa). Residues 347-406 form a disordered region; that stretch reads SQESASRSTIRSTDEREPERTSEDPPQLPPSPSSPSSPALSVKPNIDPQPPLYNSTLTTT. Basic and acidic residues predominate over residues 358 to 369; that stretch reads STDEREPERTSE. Positions 372-381 are enriched in pro residues; sequence PQLPPSPSSP. A helical transmembrane segment spans residues 575 to 595; the sequence is IVIFIFALVVSMAIYCTAAYF. Residues 596 to 614 lie on the Extracellular side of the membrane; sequence VWQKKVERKLWYLTNSKLS. A helical membrane pass occupies residues 615–635; that stretch reads FVPILVSFIILYNTMVPISLY. Residues 636 to 1309 lie on the Cytoplasmic side of the membrane; it reads VSMEIIRVFQ…YILGTFYKEQ (674 aa). The active-site 4-aspartylphosphate intermediate is the Asp684. Asp684, Lys685, Thr686, Glu794, Phe843, Ser845, Lys848, and Lys866 together coordinate ATP. Asp684 lines the Mg(2+) pocket. Thr686 lines the Mg(2+) pocket. The residue at position 954 (Ser954) is a Phosphoserine. Residues Arg1022, Thr1023, Thr1102, Gly1103, Asp1104, 1181–1188, Arg1216, and Lys1222 each bind ATP; that span reads VIVIDGST. Mg(2+) is bound at residue Asp1243. 2 residues coordinate ATP: Asn1246 and Asp1247. A helical transmembrane segment spans residues 1310-1330; the sequence is FFFLMQAIMQPFVGYTGQSLY. Over 1331-1332 the chain is Extracellular; sequence ES. Residues 1333–1353 traverse the membrane as a helical segment; sequence WGLTCFNTLFSSLCVIGLGIF. Over 1354–1381 the chain is Cytoplasmic; sequence EKDLSASTVIAVPELYQKGINNEAFNWR. A helical transmembrane segment spans residues 1382 to 1402; the sequence is VYFGWCSIAFIQAFLVFYVTY. Over 1403-1414 the chain is Extracellular; that stretch reads SLFGMKELNDNN. A helical transmembrane segment spans residues 1415-1435; it reads IFAYGQLIFTAAIFIMNFKLV. The Cytoplasmic portion of the chain corresponds to 1436–1443; sequence FIEMQYIN. A helical membrane pass occupies residues 1444-1464; sequence IISIIVLVLTSLAWFLFNIFI. Over 1465 to 1490 the chain is Extracellular; that stretch reads SEHYPDKNLYLARSQFLHHFGKNPSW. The chain crosses the membrane as a helical span at residues 1491 to 1511; the sequence is WLTMLFVMVCALTIDIVAQML. At 1512–1562 the chain is on the cytoplasmic side; it reads RRTLRPTDTDIFVEMENDAFVRSRFEQESGEFLQANAPSVDEIEQYLKSRD.

Belongs to the cation transport ATPase (P-type) (TC 3.A.3) family. Type IV subfamily. The cofactor is Mg(2+).

Its subcellular location is the golgi apparatus. It localises to the trans-Golgi network membrane. The protein resides in the endosome membrane. The catalysed reaction is ATP + H2O + phospholipidSide 1 = ADP + phosphate + phospholipidSide 2.. It catalyses the reaction a 1,2-diacyl-sn-glycero-3-phosphocholine(out) + ATP + H2O = a 1,2-diacyl-sn-glycero-3-phosphocholine(in) + ADP + phosphate + H(+). It carries out the reaction a 1,2-diacyl-sn-glycero-3-phosphoethanolamine(out) + ATP + H2O = a 1,2-diacyl-sn-glycero-3-phosphoethanolamine(in) + ADP + phosphate + H(+). Catalytic component of a P4-ATPase flippase complex which catalyzes the hydrolysis of ATP coupled to the transport of phosphatidylcholine and small amounts of phosphatidylethanolamine from the lumen to the cytosolic leaflet of the trans-Golgi network and ensures the maintenance of asymmetric distribution of phospholipids. May be involved in transport from early endosomes to the trans-Golgi network (TGN). The sequence is that of Phospholipid-transporting ATPase dnf1 from Schizosaccharomyces pombe (strain 972 / ATCC 24843) (Fission yeast).